The sequence spans 469 residues: Ubiquitin carboxyl-terminal hydrolase MINDY-1 (469 aa).

The interval 1–105 (MEHHQPEHPA…RLQELPQSPR (105 aa)) is disordered. The span at 23-44 (ENHKVLSEPKEHPQDKDAKEAD) shows a compositional bias: basic and acidic residues. The residue at position 103 (Ser-103) is a Phosphoserine. The active-site Nucleophile is Cys-137. The active-site Proton acceptor is His-319. Residues 388-428 (QVDQDYLIALSLQQQQPPPQGTSGLSDLELAQQLQQEEYQQ) form a ubiquitin-binding domain (UBD) region. The interval 401-469 (QQQPPPQGTS…PKQESDCVLL (69 aa)) is disordered. Positions 415-448 (LELAQQLQQEEYQQHQAAQAAPARAPSPQGRGAA) are enriched in low complexity. The residue at position 441 (Ser-441) is a Phosphoserine. Residues 453 to 469 (AAERRQRPKQESDCVLL) show a composition bias toward basic and acidic residues.

Belongs to the MINDY deubiquitinase family. FAM63 subfamily.

The enzyme catalyses Thiol-dependent hydrolysis of ester, thioester, amide, peptide and isopeptide bonds formed by the C-terminal Gly of ubiquitin (a 76-residue protein attached to proteins as an intracellular targeting signal).. Its function is as follows. Hydrolase that can specifically remove 'Lys-48'-linked conjugated ubiquitin from proteins. Has exodeubiquitinase activity and has a preference for long polyubiquitin chains. May play a regulatory role at the level of protein turnover. The chain is Ubiquitin carboxyl-terminal hydrolase MINDY-1 (MINDY1) from Bos taurus (Bovine).